The primary structure comprises 590 residues: UvrABC system protein C (590 aa).

Positions 14–91 constitute a GIY-YIG domain; sequence DQPGCYLMKD…IKKHDPKYNV (78 aa). A UVR domain is found at 196–231; that stretch reads NEVKKELEEKMHEAAENLEFERAKELRDQIAHIEST.

It belongs to the UvrC family. Interacts with UvrB in an incision complex.

It localises to the cytoplasm. In terms of biological role, the UvrABC repair system catalyzes the recognition and processing of DNA lesions. UvrC both incises the 5' and 3' sides of the lesion. The N-terminal half is responsible for the 3' incision and the C-terminal half is responsible for the 5' incision. The protein is UvrABC system protein C of Bacillus subtilis (strain 168).